We begin with the raw amino-acid sequence, 55 residues long: Large ribosomal subunit protein bL33 (55 aa).

This sequence belongs to the bacterial ribosomal protein bL33 family.

The polypeptide is Large ribosomal subunit protein bL33 (Rhodopseudomonas palustris (strain BisB5)).